The primary structure comprises 230 residues: Sugar fermentation stimulation protein homolog (230 aa).

This sequence belongs to the SfsA family.

The protein is Sugar fermentation stimulation protein homolog of Clostridium botulinum (strain Okra / Type B1).